A 142-amino-acid polypeptide reads, in one-letter code: MRNYDLSPLLRQWIGFDKLANALQNSGESQSFPPYNIEKSDDNHYRITLALAGFRQEDLDIQLEGTRLTVKGTPEQPENEPKWLHQGLVMQPFSLSFTLAENMEVSGATFTNGLLYIDLTRNEPETIPPQRIAINERSALNS.

The sHSP domain occupies 26-137; sequence SGESQSFPPY…PPQRIAINER (112 aa).

The protein belongs to the small heat shock protein (HSP20) family. Homodimer. Forms homomultimers of about 100-150 subunits at optimal growth temperatures. Conformation changes to oligomers at high temperatures or high ionic concentrations. The decrease in size of the multimers is accompanied by an increase in chaperone activity.

It is found in the cytoplasm. Its function is as follows. Associates with aggregated proteins, together with IbpA, to stabilize and protect them from irreversible denaturation and extensive proteolysis during heat shock and oxidative stress. Aggregated proteins bound to the IbpAB complex are more efficiently refolded and reactivated by the ATP-dependent chaperone systems ClpB and DnaK/DnaJ/GrpE. Its activity is ATP-independent. The polypeptide is Small heat shock protein IbpB (Salmonella typhi).